The following is a 441-amino-acid chain: 3-phosphoshikimate 1-carboxyvinyltransferase (441 aa).

Residues 1–24 (MSGTGQSDDPRELKAGGSLQGRVK) form a disordered region. 3-phosphoshikimate is bound by residues lysine 29, serine 30, and arginine 34. Lysine 29 contributes to the phosphoenolpyruvate binding site. Phosphoenolpyruvate-binding residues include glycine 103 and arginine 132. Serine 177, glutamine 179, aspartate 328, and lysine 355 together coordinate 3-phosphoshikimate. Glutamine 179 lines the phosphoenolpyruvate pocket. Catalysis depends on aspartate 328, which acts as the Proton acceptor. Residues arginine 359 and arginine 401 each contribute to the phosphoenolpyruvate site.

It belongs to the EPSP synthase family. Monomer.

Its subcellular location is the cytoplasm. The catalysed reaction is 3-phosphoshikimate + phosphoenolpyruvate = 5-O-(1-carboxyvinyl)-3-phosphoshikimate + phosphate. Its pathway is metabolic intermediate biosynthesis; chorismate biosynthesis; chorismate from D-erythrose 4-phosphate and phosphoenolpyruvate: step 6/7. Catalyzes the transfer of the enolpyruvyl moiety of phosphoenolpyruvate (PEP) to the 5-hydroxyl of shikimate-3-phosphate (S3P) to produce enolpyruvyl shikimate-3-phosphate and inorganic phosphate. This chain is 3-phosphoshikimate 1-carboxyvinyltransferase, found in Synechococcus sp. (strain CC9605).